A 456-amino-acid chain; its full sequence is Cysteine--tRNA ligase (456 aa).

Residue C28 participates in Zn(2+) binding. A 'HIGH' region motif is present at residues I30 to H40. Zn(2+)-binding residues include C209, H234, and E238. Positions K266–S270 match the 'KMSKS' region motif. K269 lines the ATP pocket.

This sequence belongs to the class-I aminoacyl-tRNA synthetase family. In terms of assembly, monomer. Zn(2+) is required as a cofactor.

The protein localises to the cytoplasm. The enzyme catalyses tRNA(Cys) + L-cysteine + ATP = L-cysteinyl-tRNA(Cys) + AMP + diphosphate. The chain is Cysteine--tRNA ligase from Legionella pneumophila (strain Corby).